Here is a 314-residue protein sequence, read N- to C-terminus: Methenyltetrahydromethanopterin cyclohydrolase (314 aa).

Belongs to the MCH family.

Its subcellular location is the cytoplasm. It carries out the reaction 5,10-methenyl-5,6,7,8-tetrahydromethanopterin + H2O = N(5)-formyl-5,6,7,8-tetrahydromethanopterin + H(+). It participates in one-carbon metabolism; methanogenesis from CO(2); 5,10-methenyl-5,6,7,8-tetrahydromethanopterin from CO(2): step 3/3. Its function is as follows. Catalyzes the reversible interconversion of 5-formyl-H(4)MPT to methenyl-H(4)MPT(+). This chain is Methenyltetrahydromethanopterin cyclohydrolase, found in Methanoregula boonei (strain DSM 21154 / JCM 14090 / 6A8).